The following is a 227-amino-acid chain: Ribosomal RNA small subunit methyltransferase G (227 aa).

S-adenosyl-L-methionine is bound by residues glycine 69, phenylalanine 74, 119-120, and arginine 134; that span reads VE.

Belongs to the methyltransferase superfamily. RNA methyltransferase RsmG family.

The protein resides in the cytoplasm. Functionally, specifically methylates the N7 position of a guanine in 16S rRNA. This Mycoplasmopsis pulmonis (strain UAB CTIP) (Mycoplasma pulmonis) protein is Ribosomal RNA small subunit methyltransferase G.